Here is a 74-residue protein sequence, read N- to C-terminus: Dermaseptin-B3 (74 aa).

Residues 1–22 (MAFLKKSVFLVLFLGLVSLSIC) form the signal peptide. A propeptide spanning residues 23 to 43 (EEEKREEENEEKQEDDEQSEE) is cleaved from the precursor.

As to expression, expressed by the skin glands.

It localises to the secreted. In terms of biological role, possesses a potent antimicrobial activity against Gram-positive and Gram-negative bacteria. Probably acts by disturbing membrane functions with its amphipathic structure. This is Dermaseptin-B3 from Phyllomedusa bicolor (Two-colored leaf frog).